The sequence spans 383 residues: S-adenosylmethionine synthase (383 aa).

His15 contacts ATP. Mg(2+) is bound at residue Asp17. Residue Glu43 participates in K(+) binding. The L-methionine site is built by Glu56 and Gln99. Residues 99–109 (QSPDINQGVDR) are flexible loop. ATP contacts are provided by residues 164-166 (DAK), 230-231 (RF), Asp239, 245-246 (RK), Ala262, and Lys266. Asp239 is a binding site for L-methionine. Lys270 is an L-methionine binding site.

Belongs to the AdoMet synthase family. Homotetramer; dimer of dimers. Mg(2+) is required as a cofactor. K(+) serves as cofactor.

The protein localises to the cytoplasm. The enzyme catalyses L-methionine + ATP + H2O = S-adenosyl-L-methionine + phosphate + diphosphate. It functions in the pathway amino-acid biosynthesis; S-adenosyl-L-methionine biosynthesis; S-adenosyl-L-methionine from L-methionine: step 1/1. Functionally, catalyzes the formation of S-adenosylmethionine (AdoMet) from methionine and ATP. The overall synthetic reaction is composed of two sequential steps, AdoMet formation and the subsequent tripolyphosphate hydrolysis which occurs prior to release of AdoMet from the enzyme. This chain is S-adenosylmethionine synthase, found in Shewanella loihica (strain ATCC BAA-1088 / PV-4).